The following is a 184-amino-acid chain: Photosystem I assembly protein Ycf4 (184 aa).

A run of 2 helical transmembrane segments spans residues 21-43 and 58-80; these read NFCWAFILFLGSLGFLLVGISSY and LFFPQGIVMSFYGIAGLFISSYL.

Belongs to the Ycf4 family.

The protein localises to the plastid. Its subcellular location is the chloroplast thylakoid membrane. Functionally, seems to be required for the assembly of the photosystem I complex. This is Photosystem I assembly protein Ycf4 from Carpobrotus chilensis (Sea fig).